The primary structure comprises 205 residues: Protein-L-isoaspartate O-methyltransferase (205 aa).

The active site involves S56.

Belongs to the methyltransferase superfamily. L-isoaspartyl/D-aspartyl protein methyltransferase family.

It localises to the cytoplasm. The catalysed reaction is [protein]-L-isoaspartate + S-adenosyl-L-methionine = [protein]-L-isoaspartate alpha-methyl ester + S-adenosyl-L-homocysteine. Its function is as follows. Catalyzes the methyl esterification of L-isoaspartyl residues in peptides and proteins that result from spontaneous decomposition of normal L-aspartyl and L-asparaginyl residues. It plays a role in the repair and/or degradation of damaged proteins. In Aeromonas hydrophila subsp. hydrophila (strain ATCC 7966 / DSM 30187 / BCRC 13018 / CCUG 14551 / JCM 1027 / KCTC 2358 / NCIMB 9240 / NCTC 8049), this protein is Protein-L-isoaspartate O-methyltransferase.